Reading from the N-terminus, the 303-residue chain is ATP synthase gamma chain (303 aa).

Belongs to the ATPase gamma chain family. F-type ATPases have 2 components, CF(1) - the catalytic core - and CF(0) - the membrane proton channel. CF(1) has five subunits: alpha(3), beta(3), gamma(1), delta(1), epsilon(1). CF(0) has three main subunits: a, b and c.

The protein resides in the cell membrane. Produces ATP from ADP in the presence of a proton gradient across the membrane. The gamma chain is believed to be important in regulating ATPase activity and the flow of protons through the CF(0) complex. The protein is ATP synthase gamma chain of Nocardioides sp. (strain ATCC BAA-499 / JS614).